Reading from the N-terminus, the 80-residue chain is Large ribosomal subunit protein bL28 (80 aa).

The tract at residues 1–21 (MSRICQITRKKSMKGNSVAHS) is disordered.

The protein belongs to the bacterial ribosomal protein bL28 family.

The sequence is that of Large ribosomal subunit protein bL28 from Azobacteroides pseudotrichonymphae genomovar. CFP2.